A 338-amino-acid polypeptide reads, in one-letter code: Solute carrier family 35 member G5 (338 aa).

The tract at residues 1-21 (MAGSHPYFNLPDSTHPSPPSA) is disordered. 9 consecutive transmembrane segments (helical) span residues 37 to 57 (TNGL…VGPL), 67 to 87 (LPSL…ALPL), 105 to 125 (CFCA…VQVV), 160 to 180 (CGLL…LWTL), 190 to 210 (ALGY…LLVY), 221 to 241 (TVAF…LFVL), 250 to 270 (LLSW…FTCV), 281 to 301 (LVCA…YYVL), and 305 to 325 (VAPF…IITA). In terms of domain architecture, EamA 1 spans 49–174 (LPAGFVGPLS…SILGLIIIVG (126 aa)). An EamA 2 domain is found at 272-325 (YAVTKAHPALVCAVLHSEVVVALILQYYVLHETVAPFDITGAGIVLGSIAIITA).

Belongs to the SLC35G solute transporter family.

It is found in the membrane. This chain is Solute carrier family 35 member G5 (SLC35G5), found in Pan paniscus (Pygmy chimpanzee).